The primary structure comprises 545 residues: CTP synthase (545 aa).

An amidoligase domain region spans residues 1–266; that stretch reads MTTNYIFVTG…DDYICKRFSL (266 aa). Ser-14 contributes to the CTP binding site. Ser-14 is a UTP binding site. Residues 15–20 and Asp-72 contribute to the ATP site; that span reads SLGKGI. Mg(2+)-binding residues include Asp-72 and Glu-140. CTP contacts are provided by residues 147–149, 187–192, and Lys-223; these read DIE and KTKPTQ. UTP contacts are provided by residues 187 to 192 and Lys-223; that span reads KTKPTQ. An ATP-binding site is contributed by 239-241; that stretch reads KDI. Positions 291–542 constitute a Glutamine amidotransferase type-1 domain; that stretch reads TIGMVGKYVA…VKAAGAYQKR (252 aa). An L-glutamine-binding site is contributed by Gly-352. Cys-379 acts as the Nucleophile; for glutamine hydrolysis in catalysis. L-glutamine contacts are provided by residues 380-383, Glu-403, and Arg-470; that span reads LGMQ. Residues His-515 and Glu-517 contribute to the active site.

It belongs to the CTP synthase family. Homotetramer.

The catalysed reaction is UTP + L-glutamine + ATP + H2O = CTP + L-glutamate + ADP + phosphate + 2 H(+). It catalyses the reaction L-glutamine + H2O = L-glutamate + NH4(+). The enzyme catalyses UTP + NH4(+) + ATP = CTP + ADP + phosphate + 2 H(+). It participates in pyrimidine metabolism; CTP biosynthesis via de novo pathway; CTP from UDP: step 2/2. With respect to regulation, allosterically activated by GTP, when glutamine is the substrate; GTP has no effect on the reaction when ammonia is the substrate. The allosteric effector GTP functions by stabilizing the protein conformation that binds the tetrahedral intermediate(s) formed during glutamine hydrolysis. Inhibited by the product CTP, via allosteric rather than competitive inhibition. In terms of biological role, catalyzes the ATP-dependent amination of UTP to CTP with either L-glutamine or ammonia as the source of nitrogen. Regulates intracellular CTP levels through interactions with the four ribonucleotide triphosphates. The protein is CTP synthase of Pectobacterium atrosepticum (strain SCRI 1043 / ATCC BAA-672) (Erwinia carotovora subsp. atroseptica).